The sequence spans 992 residues: Meckelin (992 aa).

Positions 1–36 (MVTRTRPVAAMAVRSRSSSRTGTAYLLLVLCEVSWA) are cleaved as a signal peptide. The cysteine-rich stretch occupies residues 37–280 (QIFSFPFRRP…FHYIFESTAG (244 aa)). Residues 37–516 (QIFSFPFRRP…SVKYEMNQGD (480 aa)) lie on the Extracellular side of the membrane. Disulfide bonds link Cys49–Cys62, Cys65–Cys78, Cys80–Cys97, Cys100–Cys114, Cys117–Cys127, Cys129–Cys150, Cys153–Cys170, Cys173–Cys184, Cys186–Cys197, Cys237–Cys246, Cys253–Cys268, and Cys354–Cys375. The N-linked (GlcNAc...) asparagine glycan is linked to Asn242. A helical membrane pass occupies residues 517–545 (ASVHTDIALGVLGGLAVLSSLLKTAGWKR). Residues 546–555 (RVGSPMIDLQ) lie on the Cytoplasmic side of the membrane. The helical transmembrane segment at 556-587 (TVMKFLLYYAGDLANVFFIITVGTGLYWLIFF) threads the bilayer. The Extracellular portion of the chain corresponds to 588-600 (KAQKSVSVLLPMP). A helical membrane pass occupies residues 601 to 628 (VQEERFVTYVGCAFAMKALQFLHKFISQ). Residues 629-667 (ISIDIFFIDWERPKGKVLKAVEGEGGVRSATVPVSIWRT) are Cytoplasmic-facing. Positions 668 to 676 (YFVANEWNE) form an intramembrane region, helical. The discontinuously helical transmembrane segment at 668–698 (YFVANEWNEIQTVRKINPLFQVLTTLFFLEV) threads the bilayer. Residues 677–685 (IQTVRKINP) lie within the membrane without spanning it. Positions 686 to 698 (LFQVLTTLFFLEV) form an intramembrane region, helical. The Extracellular segment spans residues 699-728 (VGFKNLALMDSSSSLSRNPSDYTAPYSRIL). The segment at residues 729-754 (RYAVATAIWLVIGIIQVVFFAAFYER) is an intramembrane region (helical). The chain crosses the membrane as a discontinuously helical span at residues 729–768 (RYAVATAIWLVIGIIQVVFFAAFYERFIEDKIRQFVDLCS). The stretch at 755 to 759 (FIEDK) is an intramembrane region. The segment at residues 760 to 768 (IRQFVDLCS) is an intramembrane region (helical). The Cytoplasmic segment spans residues 769–923 (MSNVSVFLLS…SIFYNDEGHS (155 aa)). The segment at residues 924 to 926 (FSS) is an intramembrane region (helical). Residues 924 to 949 (FSSVLYYGNEATLLIFDLLFFCVVDL) form a discontinuously helical membrane-spanning segment. Residues 927–933 (VLYYGNE) lie within the membrane without spanning it. The helical intramembrane region spans 934–949 (ATLLIFDLLFFCVVDL). Residues 950–954 (ACQDF) are Extracellular-facing. Residues 955-982 (VLASFLTYLQQEIFRFIRNTVGQKNLAT) form a helical membrane-spanning segment. At 983-992 (KTLVDERFLI) the chain is on the cytoplasmic side.

In terms of assembly, homodimer. Part of the tectonic-like complex (also named B9 complex). Interacts with DNAJB9, DNAJC10 and mutated SFTPC. Interacts with SYNE2 during the early establishment of cell polarity. Interacts (via C-terminus) with FLNA. Interacts with TMEM218. Interacts with WNT5A. Interacts with ROR2.

It is found in the cell membrane. The protein localises to the endoplasmic reticulum membrane. Its subcellular location is the cytoplasm. The protein resides in the cytoskeleton. It localises to the cilium basal body. Part of the tectonic-like complex which is required for tissue-specific ciliogenesis and may regulate ciliary membrane composition. Involved in centrosome migration to the apical cell surface during early ciliogenesis. Required for ciliary structure and function, including a role in regulating length and appropriate number through modulating centrosome duplication. Is a key regulator of stereociliary bundle orientation. Required for epithelial cell branching morphology. Essential for endoplasmic reticulum-associated degradation (ERAD) of surfactant protein C (sftpc). Involved in the negative regulation of canonical Wnt signaling, and activation of the non-canonical cascade stimulated by WNT5A. In non-canonical Wnt signaling, it may act as ROR2 coreceptor. This Mus musculus (Mouse) protein is Meckelin (Tmem67).